A 187-amino-acid chain; its full sequence is Protein TIFY 11b (187 aa).

The Tify domain occupies 68–103 (ATAPAAPLTIFYGGRMVVFEDFPADKAAEVMRMASS). A Jas motif is present at residues 121–145 (PIMRKASLQRFFAKRKDRLAATTPY). The short motif at 123-130 (MRKASLQR) is the Nuclear localization signal element. The segment at 139 to 168 (LAATTPYARPSPAETKASEPEEKKTPTSWL) is disordered. A compositionally biased stretch (basic and acidic residues) spans 154 to 163 (KASEPEEKKT).

Belongs to the TIFY/JAZ family. In terms of assembly, interacts with COI1B in a coronatine-dependent manner. Coronatine is an analog of jasmonoyl isoleucine (JA-Ile). Ubiquitinated. Targeted for degradation by the SCF(COI1) E3 ubiquitin ligase-proteasome pathway during jasmonate signaling.

Its subcellular location is the nucleus. Functionally, repressor of jasmonate responses. This chain is Protein TIFY 11b, found in Oryza sativa subsp. japonica (Rice).